The primary structure comprises 181 residues: Probable GTP-binding protein EngB (181 aa).

One can recognise an EngB-type G domain in the interval 18–181; it reads PKNEICFVGR…LQDLVNNLFN (164 aa). Residues 26 to 33, 52 to 56, 70 to 73, 137 to 140, and 164 to 166 contribute to the GTP site; these read GRSNVGKS, GKTKL, DLPG, TKRD, and VSI. Mg(2+)-binding residues include S33 and T54.

This sequence belongs to the TRAFAC class TrmE-Era-EngA-EngB-Septin-like GTPase superfamily. EngB GTPase family. Requires Mg(2+) as cofactor.

In terms of biological role, necessary for normal cell division and for the maintenance of normal septation. This chain is Probable GTP-binding protein EngB, found in Mycoplasma mobile (strain ATCC 43663 / 163K / NCTC 11711) (Mesomycoplasma mobile).